A 192-amino-acid chain; its full sequence is Density-regulated protein homolog (192 aa).

A disordered region spans residues 62–116 (GLEISDEPAADGDEKKKQKRGGKGSKTGAAAAQAAASGGKKKGGGPQKVTLQREP). The segment covering 87 to 99 (KTGAAAAQAAASG) has biased composition (low complexity). The SUI1 domain occupies 117–176 (RGKKSVTVIKGLATFDIDLKVASKLFAQKFACGSSVTGADEIVIQGDVKDDLLDLIPEKW).

It belongs to the DENR family.

This chain is Density-regulated protein homolog, found in Caenorhabditis elegans.